Consider the following 558-residue polypeptide: Putative polypeptide N-acetylgalactosaminyltransferase 13 (558 aa).

The Cytoplasmic portion of the chain corresponds to 1–12 (MHAGGKYCGPRH). Residues 13–32 (CSFYIIAFLICQLFFLVIFI) traverse the membrane as a helical; Signal-anchor for type II membrane protein segment. Residues 33–558 (RNDDASSANE…QFALEMEGQT (526 aa)) lie on the Lumenal side of the membrane. N-linked (GlcNAc...) asparagine glycosylation is found at N48 and N111. 4 disulfides stabilise this stretch: C97–C335, C326–C412, C445–C460, and C484–C498. A catalytic subdomain A region spans residues 109 to 225 (EANVSVVISF…EGWLEPLLER (117 aa)). The substrate site is built by D150 and R186. Position 209 (D209) interacts with Mn(2+). S210 lines the substrate pocket. H211 contributes to the Mn(2+) binding site. Residues 281–343 (PYQSPAFAGG…PCSRIGHIFR (63 aa)) form a catalytic subdomain B region. W312 is a binding site for substrate. Residue H340 coordinates Mn(2+). Residues R343 and H346 each contribute to the substrate site. The 135-residue stretch at 422–556 (VSPELRMHFD…SFQFALEMEG (135 aa)) folds into the Ricin B-type lectin domain. An N-linked (GlcNAc...) asparagine glycan is attached at N501. A disulfide bridge connects residues C525 and C539.

The protein belongs to the glycosyltransferase 2 family. GalNAc-T subfamily. Mn(2+) serves as cofactor. In terms of tissue distribution, during embryonic stages 16-17, very weak expression in the midgut.

It is found in the golgi apparatus membrane. The catalysed reaction is L-seryl-[protein] + UDP-N-acetyl-alpha-D-galactosamine = a 3-O-[N-acetyl-alpha-D-galactosaminyl]-L-seryl-[protein] + UDP + H(+). It carries out the reaction L-threonyl-[protein] + UDP-N-acetyl-alpha-D-galactosamine = a 3-O-[N-acetyl-alpha-D-galactosaminyl]-L-threonyl-[protein] + UDP + H(+). It functions in the pathway protein modification; protein glycosylation. Functionally, may catalyze the initial reaction in O-linked oligosaccharide biosynthesis, the transfer of an N-acetyl-D-galactosamine residue to a serine or threonine residue on the protein receptor. The polypeptide is Putative polypeptide N-acetylgalactosaminyltransferase 13 (pgant13) (Drosophila melanogaster (Fruit fly)).